A 242-amino-acid polypeptide reads, in one-letter code: MILLIDAGNTRIKWGVIRGEAWIAEGALIHAEVAALGDIVAAHPGLRRVVGTNVAGADIAAAIAAALRGVGSAPQWIHASAERCGVRNRYDNPAQLGADRWVALIGARALHRAACLVVNAGTATTVDVLAASGDFDGGIILPGEDLMRRALAGNTAQLPFAEGRYVGAPRNTADAIVSGCRNAQAGAIERMFRQIAHLPGARCLLSGGAAPQLEELLGIPFSRVDNLVLKGLAVVAREDAAA.

ATP is bound at residue 6–13 (DAGNTRIK). Substrate is bound by residues Y90 and 97–100 (GADR). D99 acts as the Proton acceptor in catalysis. T122 contributes to the ATP binding site. A substrate-binding site is contributed by T172.

Belongs to the type III pantothenate kinase family. In terms of assembly, homodimer. The cofactor is NH4(+). K(+) is required as a cofactor.

Its subcellular location is the cytoplasm. It carries out the reaction (R)-pantothenate + ATP = (R)-4'-phosphopantothenate + ADP + H(+). Its pathway is cofactor biosynthesis; coenzyme A biosynthesis; CoA from (R)-pantothenate: step 1/5. Functionally, catalyzes the phosphorylation of pantothenate (Pan), the first step in CoA biosynthesis. The chain is Type III pantothenate kinase from Aromatoleum aromaticum (strain DSM 19018 / LMG 30748 / EbN1) (Azoarcus sp. (strain EbN1)).